A 412-amino-acid polypeptide reads, in one-letter code: uncharacterized protein (412 aa).

Residue H49 participates in Zn(2+) binding. E52 serves as the catalytic Proton acceptor. The Zn(2+) site is built by H53 and E129.

It belongs to the peptidase M16 family. Zn(2+) serves as cofactor.

This is an uncharacterized protein from Rickettsia bellii (strain RML369-C).